Consider the following 174-residue polypeptide: uncharacterized protein (174 aa).

Basic and acidic residues-rich tracts occupy residues 1–31 (MDKHGVKTPLWKKETEELRAEDAEQEEGKEG) and 52–67 (EPPRVAEEGEGRERRS). The segment at 1–69 (MDKHGVKTPL…GEGRERRSVS (69 aa)) is disordered.

This is an uncharacterized protein from Homo sapiens (Human).